The chain runs to 332 residues: RING-H2 finger protein ATL81 (332 aa).

Positions 1-19 (MYDLTFLLISLFPIDITLP) are cleaved as a signal peptide. Residues 76 to 96 (IVLTGSLLFIIFTGFFSFFFC) traverse the membrane as a helical segment. The RING-type; atypical zinc finger occupies 154–196 (CSICLTEFMDDDTIRLISTCNHSFHTICIDLWFEGHKTCPVCR).

This sequence belongs to the RING-type zinc finger family. ATL subfamily.

The protein resides in the membrane. The enzyme catalyses S-ubiquitinyl-[E2 ubiquitin-conjugating enzyme]-L-cysteine + [acceptor protein]-L-lysine = [E2 ubiquitin-conjugating enzyme]-L-cysteine + N(6)-ubiquitinyl-[acceptor protein]-L-lysine.. It participates in protein modification; protein ubiquitination. The protein is RING-H2 finger protein ATL81 (ATL81) of Arabidopsis thaliana (Mouse-ear cress).